The following is a 193-amino-acid chain: dCTP deaminase (193 aa).

DCTP-binding positions include 110-115 (RSSLAR), Asp-128, 136-138 (VLE), Tyr-171, Lys-178, and Gln-182. The active-site Proton donor/acceptor is the Glu-138. A disordered region spans residues 169 to 193 (RPYNRRQDAKYRDQQGAVASRIDKD).

The protein belongs to the dCTP deaminase family. Homotrimer.

The catalysed reaction is dCTP + H2O + H(+) = dUTP + NH4(+). Its pathway is pyrimidine metabolism; dUMP biosynthesis; dUMP from dCTP (dUTP route): step 1/2. Its function is as follows. Catalyzes the deamination of dCTP to dUTP. This Salmonella paratyphi B (strain ATCC BAA-1250 / SPB7) protein is dCTP deaminase.